A 993-amino-acid chain; its full sequence is MASADDYFSDFEDDELDKLYEKAINKSVKETITRRAVPVQKDLHDNVLPGQKTVYEEIQRDVSFGPTHHELDYDALSFYVYPTNYEVRDYQYTIVHKSLFQNTLCAIPTGMGKTFIASTVMLNYFRWTKKAKIIFTAPTRPLVAQQIKACLGITGIPSDQTAILLDKSRKNREEIWANKRVFFATPQVVENDLKRGVLDPKDIVCLVIDEAHRATGSSAYTNVVKFIDRFNSSYRLLALTATPASDLEGVQEVVNNLDISKIEIRTEESMDIVKYMKKRKKEKIEVPLLLEIEDIIEQLGMAVKPVLQQAIELGIYEECDPSQINAFKAMQQSQKIIANPTIPEGIKWRNFFILQLLNNVGQMLKRLKIYGIRTFFNYFQNKCTEFTTKYNLKKSTNKIAAEFYYHPILKNIKNQCENYLSDPKFVGHGKLQCVRDELMDFFQKRGSDSRVIIFTELRESALEIVKFIDSVADDQIRPHIFIGQARAKEGFDEVKYTRKHAPKGRKKVERLHRQEQEKFLEAERTKRAANDKLERSARRTGSSEEAQISGMNQKMQKEVIHNFKKGEYNVLVCTSIGEEGLDIGEVDLIICYDTTSSPIKNIQRMGRTGRKRDGKIVLLFSSNESYKFERAMEDYSTLQALISKQCIDYKKSDRIIPEDIIPECHETLITINDENEIINEMEDVDEVIRYATQCMMGKKVKPKKAITKKKRVQENKKPKKFFMPDNVETSIVSASTLINKFLVNESGGKQLVTSNENPSKKRKIFKALDNLENDSTEEASSSLETEDEEVSDDNNVFIAEGQNGCQKDLETAIIRTGESLTTLKPLHNFERPNMALFVNDCGLPTKIEKNVKDIRGNQHNLEKEKSCTVDKNNMVLSLDDWNFFRNRYIPEGVSFDVEPNFVQYTKGVKVPHCHKVSKIITLFNDESNDNKKRTIDMNYTKCLARGMLRDEKKFVKVNDKSQVDNNSVNHDSSQSFTLSNAELDDILGSDSDF.

The region spanning 94-261 (IVHKSLFQNT…EVVNNLDISK (168 aa)) is the Helicase ATP-binding domain. 107–114 (IPTGMGKT) lines the ATP pocket. The DEAH box motif lies at 209 to 212 (DEAH). The Helicase C-terminal domain occupies 507–655 (KVERLHRQEQ…CIDYKKSDRI (149 aa)). Positions 530-551 (NDKLERSARRTGSSEEAQISGM) are disordered. Residues 539–551 (RTGSSEEAQISGM) show a composition bias toward polar residues. Positions 751–810 (LVTSNENPSKKRKIFKALDNLENDSTEEASSSLETEDEEVSDDNNVFIAEGQNGCQKDLE) are FKH1-binding region. Residues T776 and T785 each carry the phosphothreonine modification.

This sequence belongs to the DEAD box helicase family. DEAH subfamily. FANCM sub-subfamily. In terms of assembly, interacts with the MHF histone-fold complex composed of MHF1 and MHF2 to form the FANCM-MHF complex. Interacts with FHK1. Post-translationally, phosphorylation at both Thr-776 and Thr-785 is required for the interaction with FKH1.

The protein localises to the nucleus. It carries out the reaction ATP + H2O = ADP + phosphate + H(+). Its function is as follows. ATP-dependent DNA helicase involved in DNA damage repair by homologous recombination and in genome maintenance. Capable of unwinding D-loops. Plays a role in limiting crossover recombinants during mitotic DNA double-strand break (DSB) repair. Prevents crossovers between ectopic sequences by removing substrates for MUS81-MMS4 or RAD1-RAD10 cleavage. Component of a FANCM-MHF complex which promotes gene conversion at blocked replication forks, probably by reversal of the stalled fork. Binds to flap-structured DNA but not to non-flap nicked DNA, and participates in Okazaki fragment processing by stimulating the endonuclease activities of FEN1 and DNA2. Involved in recombination donor preference during mating-type switching via interaction with FKH1. This Saccharomyces cerevisiae (strain ATCC 204508 / S288c) (Baker's yeast) protein is ATP-dependent DNA helicase MPH1.